Reading from the N-terminus, the 613-residue chain is Transcription factor MTB1 (613 aa).

Residues Leu-48–Phe-130 are JAZ-interaction domain. 2 disordered regions span residues Glu-256 to Asp-285 and Ala-391 to Gln-441. Positions Gly-260 to Ala-270 are enriched in polar residues. Composition is skewed to basic and acidic residues over residues Val-394–Arg-417 and Asn-427–Gln-441. The tract at residues Glu-430–Arg-443 is basic motif; degenerate. The bHLH domain maps to Glu-430–Leu-479. Residues Glu-444–Leu-479 are helix-loop-helix motif. Residues Arg-490 to Gln-513 are disordered. The span at Gly-495–Ile-512 shows a compositional bias: polar residues.

In terms of assembly, interacts with MYC2 (via N-terminus). MTB1 competes with MED25 for binding to MYC2. Interacts (via N-terminus) with JAZ7.

Its subcellular location is the nucleus. Its function is as follows. Transcription factor that negatively regulates jasmonate (JA) signaling. Negatively regulates JA-dependent response to wounding, JA-induced expression of defense genes, JA-dependent responses against herbivorous insects, and JA-dependent resistance against Botrytis cinerea infection. Plays a positive role in resistance against the bacterial pathogen Pseudomonas syringae pv tomato DC3000. The protein is Transcription factor MTB1 of Solanum lycopersicum (Tomato).